The chain runs to 273 residues: Small ribosomal subunit protein uS2 (273 aa).

The disordered stretch occupies residues 244 to 273 (SDEEANSSAEENENRQEDLLAKKYDSSEAN). Positions 255–273 (NENRQEDLLAKKYDSSEAN) are enriched in basic and acidic residues.

It belongs to the universal ribosomal protein uS2 family.

The sequence is that of Small ribosomal subunit protein uS2 from Chlamydia felis (strain Fe/C-56) (Chlamydophila felis).